An 85-amino-acid chain; its full sequence is Serine protease inhibitor Kazal-type 7 (85 aa).

Residues 1-19 (MKITGGLLLLCTVVYFCSS) form the signal peptide. A Kazal-like domain is found at 26–85 (SPKKVDCSIYKKYPVVAIPCPITYLPVCGSDYITYGNECHLCTESLKSNGRVQFLHDGSC). Disulfide bonds link Cys32–Cys67, Cys45–Cys64, and Cys53–Cys85.

Its subcellular location is the secreted. Probable serine protease inhibitor. This is Serine protease inhibitor Kazal-type 7 (SPINK7) from Homo sapiens (Human).